A 305-amino-acid chain; its full sequence is MIRKIIILMFTFFSNIHNEKIYHHKQRRKFLKGPLGYLNRNVIQKKHYNLYAKKFINYKEIQIQRINDYRKRSGVDKNNINYNLRDTYNYHETHLFVRNEVLPTLAKIENENLKEKEKNKEIFRNINDYNSNFTRQTFLQFLMDLYNIFLKIDDLFLENKTYFSILIYNGPMQLTNHLYDDIIYVSSVVENSDDVSPSEYCMEYISHLENLCEENKLSFLAHAYVFYKNFHLSKEHLLKSICKYLNIIKKLKSSTYVADVENFEFCLNKMSRKWSRWEKDNFLASLHNATNKMMILTKHFEKVKS.

The signal sequence occupies residues 1–18 (MIRKIIILMFTFFSNIHN). The tract at residues 1 to 83 (MIRKIIILMF…GVDKNNINYN (83 aa)) is sufficient for apicoplast targeting. N-linked (GlcNAc...) asparagine glycosylation is found at Asn-132, Asn-159, and Asn-288.

Proteolytically cleaved; targeted by its N-terminal leader sequence for import into the apicoplast where it undergoes proteolytic processing, resulting in an N-terminus starting at or near Gly-33 in the mature protein.

It is found in the plastid. Its subcellular location is the apicoplast. Essential for blood-stage parasite viability. Required for apicoplast biogenesis. Associates with the apicoplast genome and mediates apicoplast gene expression. Can bind heme. Can bind protoporphyrin IX. The protein is Divergent heme oxygenase-like protein of Plasmodium falciparum (isolate 3D7).